We begin with the raw amino-acid sequence, 603 residues long: DNA mismatch repair protein MutL (603 aa).

The segment covering 336–346 has biased composition (basic and acidic residues); the sequence is EVSKKQKEQQK. Disordered regions lie at residues 336-355 and 361-384; these read EVSK…MSFE and KETP…DTSR.

It belongs to the DNA mismatch repair MutL/HexB family.

This protein is involved in the repair of mismatches in DNA. It is required for dam-dependent methyl-directed DNA mismatch repair. May act as a 'molecular matchmaker', a protein that promotes the formation of a stable complex between two or more DNA-binding proteins in an ATP-dependent manner without itself being part of a final effector complex. This Listeria welshimeri serovar 6b (strain ATCC 35897 / DSM 20650 / CCUG 15529 / CIP 8149 / NCTC 11857 / SLCC 5334 / V8) protein is DNA mismatch repair protein MutL.